The sequence spans 109 residues: Large ribosomal subunit protein uL22 (109 aa).

Belongs to the universal ribosomal protein uL22 family. Part of the 50S ribosomal subunit.

Its function is as follows. This protein binds specifically to 23S rRNA; its binding is stimulated by other ribosomal proteins, e.g. L4, L17, and L20. It is important during the early stages of 50S assembly. It makes multiple contacts with different domains of the 23S rRNA in the assembled 50S subunit and ribosome. The globular domain of the protein is located near the polypeptide exit tunnel on the outside of the subunit, while an extended beta-hairpin is found that lines the wall of the exit tunnel in the center of the 70S ribosome. The sequence is that of Large ribosomal subunit protein uL22 from Azoarcus sp. (strain BH72).